A 534-amino-acid chain; its full sequence is Phosphoenolpyruvate carboxykinase (ATP) (534 aa).

The substrate site is built by Arg60, Tyr195, and Lys201. ATP contacts are provided by residues Lys201, His221, and 237–245 (GLSGTGKTT). Mn(2+) contacts are provided by Lys201 and His221. Residue Asp258 participates in Mn(2+) binding. ATP contacts are provided by Glu287, Arg324, and Thr449. Residue Arg324 participates in substrate binding.

Belongs to the phosphoenolpyruvate carboxykinase (ATP) family. Mn(2+) serves as cofactor.

It is found in the cytoplasm. It carries out the reaction oxaloacetate + ATP = phosphoenolpyruvate + ADP + CO2. It functions in the pathway carbohydrate biosynthesis; gluconeogenesis. Functionally, involved in the gluconeogenesis. Catalyzes the conversion of oxaloacetate (OAA) to phosphoenolpyruvate (PEP) through direct phosphoryl transfer between the nucleoside triphosphate and OAA. This Flavobacterium johnsoniae (strain ATCC 17061 / DSM 2064 / JCM 8514 / BCRC 14874 / CCUG 350202 / NBRC 14942 / NCIMB 11054 / UW101) (Cytophaga johnsonae) protein is Phosphoenolpyruvate carboxykinase (ATP).